Here is a 544-residue protein sequence, read N- to C-terminus: Cytochrome P450 82A1 (544 aa).

Cys-481 provides a ligand contact to heme.

The protein belongs to the cytochrome P450 family. Requires heme as cofactor.

Its subcellular location is the membrane. This chain is Cytochrome P450 82A1 (CYP82A1), found in Pisum sativum (Garden pea).